The following is a 622-amino-acid chain: Sodium/potassium/calcium exchanger 4 (622 aa).

Positions 1–38 (MALRGLIRQSKVRRRREMLPQQVGFVCAVLALVCCASG) are cleaved as a signal peptide. Residues 39 to 97 (LFGSLGHKTASAGKHVLLDTWRNRKLMAPINGTPLAKNCTDPAIHEFPTDLFSNKERQH) are Extracellular-facing. Asn76 carries N-linked (GlcNAc...) asparagine glycosylation. The helical transmembrane segment at 98–118 (GAVLLHILGALYMFYALAIVC) threads the bilayer. Over 119 to 142 (DDFFVPSLEKICEKLHLSEDVAGA) the chain is Cytoplasmic. An Alpha-1 repeat occupies 139-179 (VAGATFMAAGSSTPELFASVIGVFITHGDVGVGTIVGSAVF). The helical transmembrane segment at 143 to 163 (TFMAAGSSTPELFASVIGVFI) threads the bilayer. The Extracellular segment spans residues 164 to 172 (THGDVGVGT). The helical transmembrane segment at 173-193 (IVGSAVFNILCIIGVCGLFAG) threads the bilayer. The Cytoplasmic portion of the chain corresponds to 194–200 (QVVRLTW). A helical membrane pass occupies residues 201 to 221 (WAVCRDSVYYTLSVIVLIAFI). Residues 222–224 (YDE) are Extracellular-facing. The chain crosses the membrane as a helical span at residues 225-245 (EIVWWEGLVLIILYVFYILIM). Topologically, residues 246 to 457 (KYNMKMQTFF…RWEKFFMVTF (212 aa)) are cytoplasmic. The segment at 358–408 (ANGVNSKPLQNGRHENMENGNVPVENPEDPQQGQEQQPPPQPPPPEPESVE) is disordered. Over residues 394 to 404 (QPPPQPPPPEP) the composition is skewed to pro residues. A helical membrane pass occupies residues 458-478 (ITATLWIAVFSYLMVWLVTII). Residue Gly479 is a topological domain, extracellular. A helical membrane pass occupies residues 480-500 (YTLGIPDVIMGITFLAAGTSV). The stretch at 495-526 (AAGTSVPDCMASLIVARQGLGDMAVSNTIGSN) is one Alpha-2 repeat. The Cytoplasmic portion of the chain corresponds to 501–526 (PDCMASLIVARQGLGDMAVSNTIGSN). A helical membrane pass occupies residues 527 to 547 (VFDILVGLGIPWGLQTMVINY). Residues 548 to 557 (GSTVKINSRG) lie on the Extracellular side of the membrane. A helical membrane pass occupies residues 558–578 (LVYSVVLLLGSVALTVLGIHL). The Cytoplasmic portion of the chain corresponds to 579–586 (NKWRLDRK). A helical transmembrane segment spans residues 587–607 (LGIYVLVLYAVFLCFSIMIEF). Over 608 to 622 (NVFTFVNLPMCREDD) the chain is Extracellular.

Belongs to the Ca(2+):cation antiporter (CaCA) (TC 2.A.19) family. SLC24A subfamily. In terms of tissue distribution, expressed in late secretory-stage and maturation-stage ameloblasts, with significantly increased expression during the late stages of amelogenesis (at protein level). Widely expressed in most regions of the brain, including hippocampus, neocortex, thalamus, striatum and olfactory bulb. Expressed in the olfactory sensory neurons.

Its subcellular location is the cell membrane. It is found in the cytoplasm. The catalysed reaction is Ca(2+)(out) + K(+)(out) + 4 Na(+)(in) = Ca(2+)(in) + K(+)(in) + 4 Na(+)(out). Calcium, potassium:sodium antiporter that transports 1 Ca(2+) and 1 K(+) in exchange for 4 Na(+). Controls the rapid response termination and proper regulation of adaptation in olfactory sensory neurons (OSNs) which subsequently influences how odor information is encoded and perceived. May play a role in calcium transport during amelogenesis. This Mus musculus (Mouse) protein is Sodium/potassium/calcium exchanger 4.